The sequence spans 510 residues: NAD(P)H-quinone oxidoreductase subunit 2 A, chloroplastic (510 aa).

13 helical membrane-spanning segments follow: residues 24 to 44 (LLLF…GLIL), 57 to 77 (IPWL…ALLF), 99 to 119 (IFQF…VEYI), 124 to 144 (MAIT…MFLC), 149 to 169 (LITI…LSGY), 183 to 203 (YLLM…WLYG), 227 to 247 (PGIS…LSPA), 295 to 315 (WHLL…LIAI), 323 to 343 (MLAY…IVGD), 354 to 374 (YMLF…SFGL), 395 to 415 (ALSL…AGFF), 418 to 438 (LHLF…IGLL), and 484 to 504 (MIVC…IIAI).

It belongs to the complex I subunit 2 family. NDH is composed of at least 16 different subunits, 5 of which are encoded in the nucleus.

The protein localises to the plastid. It is found in the chloroplast thylakoid membrane. The catalysed reaction is a plastoquinone + NADH + (n+1) H(+)(in) = a plastoquinol + NAD(+) + n H(+)(out). It catalyses the reaction a plastoquinone + NADPH + (n+1) H(+)(in) = a plastoquinol + NADP(+) + n H(+)(out). In terms of biological role, NDH shuttles electrons from NAD(P)H:plastoquinone, via FMN and iron-sulfur (Fe-S) centers, to quinones in the photosynthetic chain and possibly in a chloroplast respiratory chain. The immediate electron acceptor for the enzyme in this species is believed to be plastoquinone. Couples the redox reaction to proton translocation, and thus conserves the redox energy in a proton gradient. This chain is NAD(P)H-quinone oxidoreductase subunit 2 A, chloroplastic, found in Carica papaya (Papaya).